Reading from the N-terminus, the 244-residue chain is Phosphoadenosine 5'-phosphosulfate reductase (244 aa).

Cysteine 239 (nucleophile; cysteine thiosulfonate intermediate) is an active-site residue.

Belongs to the PAPS reductase family. CysH subfamily.

The protein localises to the cytoplasm. The enzyme catalyses [thioredoxin]-disulfide + sulfite + adenosine 3',5'-bisphosphate + 2 H(+) = [thioredoxin]-dithiol + 3'-phosphoadenylyl sulfate. It participates in sulfur metabolism; hydrogen sulfide biosynthesis; sulfite from sulfate: step 3/3. Functionally, catalyzes the formation of sulfite from phosphoadenosine 5'-phosphosulfate (PAPS) using thioredoxin as an electron donor. The protein is Phosphoadenosine 5'-phosphosulfate reductase of Salmonella heidelberg (strain SL476).